Reading from the N-terminus, the 351-residue chain is Photosystem II D2 protein (351 aa).

A helical membrane pass occupies residues 39-59; it reads CSYLALGAWFTGTTFVTSWYT. His-116 is a binding site for chlorophyll a. Residues 123–139 form a helical membrane-spanning segment; the sequence is GFCLRQFEIARLVGIRP. Residues Gln-128 and Asn-141 each coordinate pheophytin a. The helical transmembrane segment at 151–164 threads the bilayer; sequence VFVSVFLIYPLGQA. Position 196 (His-196) interacts with chlorophyll a. Residues 206-226 form a helical membrane-spanning segment; sequence GALLCAIHGATVENTLFEDGE. His-213 and Phe-260 together coordinate a plastoquinone. Fe cation is bound at residue His-213. Residue His-267 participates in Fe cation binding. Residues 277–293 traverse the membrane as a helical segment; it reads GLWTSSIGIIGLALNLR.

The protein belongs to the reaction center PufL/M/PsbA/D family. As to quaternary structure, PSII is composed of 1 copy each of membrane proteins PsbA, PsbB, PsbC, PsbD, PsbE, PsbF, PsbH, PsbI, PsbJ, PsbK, PsbL, PsbM, PsbT, PsbY, PsbZ, Psb30/Ycf12, at least 3 peripheral proteins of the oxygen-evolving complex and a large number of cofactors. It forms dimeric complexes. The D1/D2 heterodimer binds P680, chlorophylls that are the primary electron donor of PSII, and subsequent electron acceptors. It shares a non-heme iron and each subunit binds pheophytin, quinone, additional chlorophylls, carotenoids and lipids. There is also a Cl(-1) ion associated with D1 and D2, which is required for oxygen evolution. The PSII complex binds additional chlorophylls, carotenoids and specific lipids. is required as a cofactor.

The protein localises to the plastid. Its subcellular location is the chloroplast thylakoid membrane. It catalyses the reaction 2 a plastoquinone + 4 hnu + 2 H2O = 2 a plastoquinol + O2. In terms of biological role, photosystem II (PSII) is a light-driven water:plastoquinone oxidoreductase that uses light energy to abstract electrons from H(2)O, generating O(2) and a proton gradient subsequently used for ATP formation. It consists of a core antenna complex that captures photons, and an electron transfer chain that converts photonic excitation into a charge separation. The D1/D2 (PsbA/PsbD) reaction center heterodimer binds P680, the primary electron donor of PSII as well as several subsequent electron acceptors. D2 is needed for assembly of a stable PSII complex. This Galdieria sulphuraria (Red alga) protein is Photosystem II D2 protein.